The chain runs to 408 residues: Lupus La protein (408 aa).

Residues 7–99 enclose the HTH La-type RNA-binding domain; that stretch reads NEKMAALEAK…RRSPSKPLPE (93 aa). Phosphoserine is present on residues Ser92 and Ser94. The RRM domain maps to 111–187; sequence RSVYIKGFPT…TDLLILFKDD (77 aa). At Lys116 the chain carries N6-acetyllysine. At Thr120 the chain carries Phosphothreonine. Lys128 carries the N6-acetyllysine modification. Position 225 is a phosphoserine (Ser225). In terms of domain architecture, xRRM spans 227–348; that stretch reads EEKIGCLLKF…KGKGNKAAQP (122 aa). 3 positions are modified to N6-acetyllysine: Lys328, Lys341, and Lys360. A compositionally biased stretch (basic residues) spans 329 to 342; it reads WKSKGRRFKGKGKG. Residues 329–408 form a disordered region; sequence WKSKGRRFKG…QKTENGAGDQ (80 aa). At Thr362 the chain carries Phosphothreonine. Ser366 is subject to Phosphoserine; by CK2. Residues 384–395 show a composition bias toward basic and acidic residues; it reads RAREETDKEEPA.

As to quaternary structure, interacts with DDX15. May interact with RUFY1. In terms of processing, phosphorylated. The phosphorylation sites are at the C-terminal part of the protein. The N-terminus is blocked.

The protein resides in the nucleus. Binds to the 3' poly(U) terminus of nascent RNA polymerase III transcripts, protecting them from exonuclease digestion and facilitating their folding and maturation. In case of Coxsackievirus B3 infection, binds to the viral internal ribosome entry site (IRES) and stimulates the IRES-mediated translation. This Homo sapiens (Human) protein is Lupus La protein (SSB).